The primary structure comprises 148 residues: 3-dehydroquinate dehydratase (148 aa).

Catalysis depends on tyrosine 23, which acts as the Proton acceptor. Substrate contacts are provided by asparagine 74, histidine 80, and aspartate 87. Residue histidine 100 is the Proton donor of the active site. Substrate-binding positions include 101-102 (IS) and arginine 111.

The protein belongs to the type-II 3-dehydroquinase family. As to quaternary structure, homododecamer.

It carries out the reaction 3-dehydroquinate = 3-dehydroshikimate + H2O. The protein operates within metabolic intermediate biosynthesis; chorismate biosynthesis; chorismate from D-erythrose 4-phosphate and phosphoenolpyruvate: step 3/7. Its function is as follows. Catalyzes a trans-dehydration via an enolate intermediate. The polypeptide is 3-dehydroquinate dehydratase (Thermoanaerobacter pseudethanolicus (strain ATCC 33223 / 39E) (Clostridium thermohydrosulfuricum)).